The primary structure comprises 240 residues: 7-cyano-7-deazaguanine synthase (240 aa).

ATP is bound at residue Phe14–Leu24. Zn(2+) is bound by residues Cys202, Cys217, Cys220, and Cys223.

It belongs to the QueC family. Zn(2+) serves as cofactor.

The enzyme catalyses 7-carboxy-7-deazaguanine + NH4(+) + ATP = 7-cyano-7-deazaguanine + ADP + phosphate + H2O + H(+). Its pathway is purine metabolism; 7-cyano-7-deazaguanine biosynthesis. Functionally, catalyzes the ATP-dependent conversion of 7-carboxy-7-deazaguanine (CDG) to 7-cyano-7-deazaguanine (preQ(0)). The polypeptide is 7-cyano-7-deazaguanine synthase (Rhodopseudomonas palustris (strain BisB18)).